A 265-amino-acid polypeptide reads, in one-letter code: 4-hydroxy-tetrahydrodipicolinate reductase (265 aa).

NAD(+)-binding positions include Gly-7 to Met-12 and Asp-33. Residue Arg-34 coordinates NADP(+). NAD(+)-binding positions include Gly-96–Thr-98 and Ser-120–Met-123. Residue His-153 is the Proton donor/acceptor of the active site. His-154 contacts (S)-2,3,4,5-tetrahydrodipicolinate. Lys-157 (proton donor) is an active-site residue. A (S)-2,3,4,5-tetrahydrodipicolinate-binding site is contributed by Gly-163–Thr-164.

It belongs to the DapB family.

The protein localises to the cytoplasm. It carries out the reaction (S)-2,3,4,5-tetrahydrodipicolinate + NAD(+) + H2O = (2S,4S)-4-hydroxy-2,3,4,5-tetrahydrodipicolinate + NADH + H(+). The enzyme catalyses (S)-2,3,4,5-tetrahydrodipicolinate + NADP(+) + H2O = (2S,4S)-4-hydroxy-2,3,4,5-tetrahydrodipicolinate + NADPH + H(+). It participates in amino-acid biosynthesis; L-lysine biosynthesis via DAP pathway; (S)-tetrahydrodipicolinate from L-aspartate: step 4/4. In terms of biological role, catalyzes the conversion of 4-hydroxy-tetrahydrodipicolinate (HTPA) to tetrahydrodipicolinate. This is 4-hydroxy-tetrahydrodipicolinate reductase from Burkholderia pseudomallei (strain 1106a).